Consider the following 204-residue polypeptide: Methylthioribulose-1-phosphate dehydratase (204 aa).

Zn(2+) is bound by residues histidine 94 and histidine 96.

The protein belongs to the aldolase class II family. MtnB subfamily. Zn(2+) is required as a cofactor.

The catalysed reaction is 5-(methylsulfanyl)-D-ribulose 1-phosphate = 5-methylsulfanyl-2,3-dioxopentyl phosphate + H2O. The protein operates within amino-acid biosynthesis; L-methionine biosynthesis via salvage pathway; L-methionine from S-methyl-5-thio-alpha-D-ribose 1-phosphate: step 2/6. Functionally, catalyzes the dehydration of methylthioribulose-1-phosphate (MTRu-1-P) into 2,3-diketo-5-methylthiopentyl-1-phosphate (DK-MTP-1-P). The chain is Methylthioribulose-1-phosphate dehydratase from Enterobacter sp. (strain 638).